Consider the following 779-residue polypeptide: MIDSSSNNTYDVNESLKVENLTRDDYEEICKRLGRKPNRTELGMFGVMWSEHCCYRNSKPLLANFPTTGKNVLVGPGENAGVIDVGNDQKLVFKIESHNHPSAIEPFQGAATGVGGILRDIFTMGARPIAVLNSLRFGNLDKLSNISLLRGVVSGISHYGNCVGVPTVGGEIDFDDSYSGNPLVNVMALGLLETDEIVCSGAKEVGSPVLYVGNTTGKDGVGGASFASSELNTNSLDNRPAVQVGDPFIEKSLIEACLDAFKTGDVLSAQDMGAAGLTCSSAEMAANGSLGISINLDLVPARENDMSAYQYLLSESQERMLLVVKEEKLNTLINQFKKWGLFANVIGEVISRKEVIISQKNQIVAQIPTSALSDETPINIHNIIKEPPIHLLEKWEWTEEELPAISENKILSLKDQQKYSFSEIILKLLSNPSIASKSWVYRQYDSQVQSNTVFKPGDADAALIRLRRQDEKNKNNEFSGVAASVDCNSRWVLLDPYRGSIAAVAESARNVSCVGAQPIAITNNLNFSSPETEIGYWQLSSACDGISKACIALETPVTGGNVSLYNESKNQNNQVTPINPTPVIGMVGTIKNVDKAISSGWKNINDQIWIIGSNASESSIAASSYLEYFHDLVTGRPPKIHLQDEKYCQSFLRDSIQKNYIASSHDVSDGGLAVALSECCILSSKGAYIQLEEKNARQDNLLFSEGGSRILFSVNKKEEQNFLNFLEIKSKDFGRNVYVKKIGFVSEHNLDITLQDQTLCNLRVDELTEKFNNSISNCF.

Residue His52 is part of the active site. Positions 55 and 94 each coordinate ATP. Mg(2+) is bound at residue Glu96. Substrate is bound by residues 97 to 100 (SHNH) and Arg119. His98 serves as the catalytic Proton acceptor. Residue Asp120 coordinates Mg(2+). Residue Gln243 participates in substrate binding. Asp271 is a binding site for Mg(2+). A substrate-binding site is contributed by 315–317 (ESQ). ATP contacts are provided by Asn523 and Gly560. Asn561 contributes to the Mg(2+) binding site. A substrate-binding site is contributed by Ser563.

This sequence belongs to the FGAMS family. Monomer. Part of the FGAM synthase complex composed of 1 PurL, 1 PurQ and 2 PurS subunits.

The protein localises to the cytoplasm. It carries out the reaction N(2)-formyl-N(1)-(5-phospho-beta-D-ribosyl)glycinamide + L-glutamine + ATP + H2O = 2-formamido-N(1)-(5-O-phospho-beta-D-ribosyl)acetamidine + L-glutamate + ADP + phosphate + H(+). It functions in the pathway purine metabolism; IMP biosynthesis via de novo pathway; 5-amino-1-(5-phospho-D-ribosyl)imidazole from N(2)-formyl-N(1)-(5-phospho-D-ribosyl)glycinamide: step 1/2. In terms of biological role, part of the phosphoribosylformylglycinamidine synthase complex involved in the purines biosynthetic pathway. Catalyzes the ATP-dependent conversion of formylglycinamide ribonucleotide (FGAR) and glutamine to yield formylglycinamidine ribonucleotide (FGAM) and glutamate. The FGAM synthase complex is composed of three subunits. PurQ produces an ammonia molecule by converting glutamine to glutamate. PurL transfers the ammonia molecule to FGAR to form FGAM in an ATP-dependent manner. PurS interacts with PurQ and PurL and is thought to assist in the transfer of the ammonia molecule from PurQ to PurL. In Prochlorococcus marinus subsp. pastoris (strain CCMP1986 / NIES-2087 / MED4), this protein is Phosphoribosylformylglycinamidine synthase subunit PurL.